The following is a 194-amino-acid chain: Putative manganese efflux pump MntP (194 aa).

Helical transmembrane passes span 3-23, 37-57, 69-89, 110-132, 147-167, and 172-192; these read PFSI…AAIG, LRAG…GWVL, DHWI…IAGL, LGLA…SLAF, CTFS…NLIG, and ILGG…HLGA.

It belongs to the MntP (TC 9.B.29) family.

It localises to the cell inner membrane. Its function is as follows. Probably functions as a manganese efflux pump. The polypeptide is Putative manganese efflux pump MntP (Xanthomonas oryzae pv. oryzae (strain MAFF 311018)).